Consider the following 229-residue polypeptide: MMKIAILGAMSEEITPLLETLKDYTKIEHANNTYYFAKYKNHELVLAYSKIGKVNSTLSASVMIEKFGAQALLFTGVAGAFNPELEIGDLLYATKLAQYDLDITAFGHPLGFVPGNEIFIKTDEKLNNLALEVAKELNIKLRAGIIATGDEFICDEAKKAKIREIFNADACEMEGASVALVCDALKVPCFILRAMSDKAGEKAEFDFDEFVINSAKISANFVLKMCEKL.

The Proton acceptor role is filled by glutamate 13. Substrate contacts are provided by residues glycine 79, isoleucine 153, and 173–174; that span reads ME. The Proton donor role is filled by aspartate 197.

This sequence belongs to the PNP/UDP phosphorylase family. Homodimer.

The catalysed reaction is 6-amino-6-deoxyfutalosine + H2O = dehypoxanthine futalosine + adenine. The enzyme catalyses S-adenosyl-L-homocysteine + H2O = S-(5-deoxy-D-ribos-5-yl)-L-homocysteine + adenine. It catalyses the reaction S-methyl-5'-thioadenosine + H2O = 5-(methylsulfanyl)-D-ribose + adenine. It carries out the reaction 5'-deoxyadenosine + H2O = 5-deoxy-D-ribose + adenine. The protein operates within quinol/quinone metabolism; menaquinone biosynthesis. Its pathway is amino-acid biosynthesis; L-methionine biosynthesis via salvage pathway; S-methyl-5-thio-alpha-D-ribose 1-phosphate from S-methyl-5'-thioadenosine (hydrolase route): step 1/2. Its function is as follows. Catalyzes the direct conversion of aminodeoxyfutalosine (AFL) into dehypoxanthine futalosine (DHFL) and adenine via the hydrolysis of the N-glycosidic bond; this reaction seems to represent an essential step in the menaquinone biosynthesis pathway in Campylobacter species. Also catalyzes the hydrolysis of 5'-methylthioadenosine (MTA) to adenine and 5'-methylthioribose. Can also probably use S-adenosylhomocysteine (SAH) as substrate, leading to adenine and S-ribosylhomocysteine. These other activities highlight the tremendous versatility of the enzyme, which also plays key roles in S-adenosylmethionine recycling and in the biosynthesis of the quorum-sensing molecule autoinducer-2. Shows negligible activity with futalosine (FL) as substrate. The chain is Aminodeoxyfutalosine nucleosidase (pfs) from Campylobacter jejuni subsp. jejuni serotype O:2 (strain ATCC 700819 / NCTC 11168).